The sequence spans 391 residues: Glycerol-3-phosphate dehydrogenase [NAD(+)] 1 (391 aa).

Residues 41–46 (GSGNWG), Phe129, Lys152, and Ala185 each bind NAD(+). A substrate-binding site is contributed by Lys152. Catalysis depends on Lys245, which acts as the Proton acceptor. NAD(+)-binding residues include Arg310 and Gln339. Residue 310–311 (RN) participates in substrate binding.

It belongs to the NAD-dependent glycerol-3-phosphate dehydrogenase family.

It localises to the cytoplasm. The catalysed reaction is sn-glycerol 3-phosphate + NAD(+) = dihydroxyacetone phosphate + NADH + H(+). This is Glycerol-3-phosphate dehydrogenase [NAD(+)] 1 (GPD1) from Saccharomyces uvarum (Yeast).